We begin with the raw amino-acid sequence, 384 residues long: Putative pectate lyase 2 (384 aa).

Residues 1–23 (MASLFLTIISLLFAAFSSSVVEA) form the signal peptide. Residues D182, D206, and D210 each coordinate Ca(2+). Residue R262 is part of the active site.

It belongs to the polysaccharide lyase 1 family. Ca(2+) serves as cofactor.

The enzyme catalyses Eliminative cleavage of (1-&gt;4)-alpha-D-galacturonan to give oligosaccharides with 4-deoxy-alpha-D-galact-4-enuronosyl groups at their non-reducing ends.. Its pathway is glycan metabolism; pectin degradation; 2-dehydro-3-deoxy-D-gluconate from pectin: step 2/5. The protein is Putative pectate lyase 2 of Arabidopsis thaliana (Mouse-ear cress).